A 75-amino-acid chain; its full sequence is UPF0352 protein YejL (75 aa).

The protein belongs to the UPF0352 family.

In Shigella flexneri, this protein is UPF0352 protein YejL.